The following is a 100-amino-acid chain: Tetrahydromethanopterin S-methyltransferase subunit B (100 aa).

Residues 80–100 form a helical membrane-spanning segment; it reads KLTNIVYGFILGLIILFALLL.

It belongs to the MtrB family. As to quaternary structure, the complex is composed of 8 subunits; MtrA, MtrB, MtrC, MtrD, MtrE, MtrF, MtrG and MtrH.

Its subcellular location is the cell membrane. The enzyme catalyses 5-methyl-5,6,7,8-tetrahydromethanopterin + coenzyme M + 2 Na(+)(in) = 5,6,7,8-tetrahydromethanopterin + methyl-coenzyme M + 2 Na(+)(out). It participates in one-carbon metabolism; methanogenesis from CO(2); methyl-coenzyme M from 5,10-methylene-5,6,7,8-tetrahydromethanopterin: step 2/2. Functionally, part of a complex that catalyzes the formation of methyl-coenzyme M and tetrahydromethanopterin from coenzyme M and methyl-tetrahydromethanopterin. This is an energy-conserving, sodium-ion translocating step. The protein is Tetrahydromethanopterin S-methyltransferase subunit B of Methanothermobacter marburgensis (strain ATCC BAA-927 / DSM 2133 / JCM 14651 / NBRC 100331 / OCM 82 / Marburg) (Methanobacterium thermoautotrophicum).